The following is a 168-amino-acid chain: Plastocyanin, chloroplastic (168 aa).

A chloroplast-targeting transit peptide spans 1–69 (MATVTSTTVA…SAVLASNALA (69 aa)). In terms of domain architecture, Plastocyanin-like spans 70–168 (VEVLLGASDG…AGMVGQVTVN (99 aa)). Positions 106, 153, 156, and 161 each coordinate Cu cation.

The protein belongs to the plastocyanin family. Cu(2+) serves as cofactor.

It is found in the plastid. The protein resides in the chloroplast thylakoid membrane. Participates in electron transfer between P700 and the cytochrome b6-f complex in photosystem I. This Pisum sativum (Garden pea) protein is Plastocyanin, chloroplastic (PETE).